The sequence spans 141 residues: DUF35 domain-containing scaffold protein (141 aa).

Residues cysteine 30, cysteine 33, cysteine 44, and cysteine 47 each contribute to the Zn(2+) site.

This sequence belongs to the scaffold protein DUF35 family. As to quaternary structure, interacts with acetoacetyl-CoA thiolase and HMG-CoA synthase (HMGCS) that catalyzes the first and second step in the mevalonate pathway, respectively.

Its function is as follows. Functions as a scaffold to connect the acetoacetyl-CoA thiolase and HMG-CoA synthase (HMGCS) dimers in the channeling thiolase/HMGCS complex, which allows for efficient coupling of the endergonic thiolase reaction with the exergonic HMGCS reaction. In Methanocaldococcus jannaschii (strain ATCC 43067 / DSM 2661 / JAL-1 / JCM 10045 / NBRC 100440) (Methanococcus jannaschii), this protein is DUF35 domain-containing scaffold protein.